Here is a 359-residue protein sequence, read N- to C-terminus: MNIRKKTRKIYIGNIAIGGDAPIIVQSMTNTDTRDIEATLKQINQLHAVGCEIVRLAVPDANAAKALKAIHDASPLPLIADIHFDYRLALTALESGIEGLRINPGNIGERKKVVTVVDAAKAHKASIRIGVNSGSVEKHLIDKFGGPVPEAMVESALNHIKILEDEKFYEIKVSIKSSSVLDTIAAYRMLSKSCDYPLHLGVTEAGSLIRGTVKSSVGLGILLSEGIGDTLRISLTEDPVEEVPVAWEILRALGLRRRGPEIIACPSCGRAEIDLIRLTKDVEACLVNEKTPLKIAVMGCVVNGPGEAKEADIGIAGGRDKGIIFAKGKVIRSVHGQDKLLNVFMEEVNKVIAEYNTTQ.

[4Fe-4S] cluster is bound by residues C265, C268, C300, and E307.

This sequence belongs to the IspG family. The cofactor is [4Fe-4S] cluster.

The enzyme catalyses (2E)-4-hydroxy-3-methylbut-2-enyl diphosphate + oxidized [flavodoxin] + H2O + 2 H(+) = 2-C-methyl-D-erythritol 2,4-cyclic diphosphate + reduced [flavodoxin]. Its pathway is isoprenoid biosynthesis; isopentenyl diphosphate biosynthesis via DXP pathway; isopentenyl diphosphate from 1-deoxy-D-xylulose 5-phosphate: step 5/6. Its function is as follows. Converts 2C-methyl-D-erythritol 2,4-cyclodiphosphate (ME-2,4cPP) into 1-hydroxy-2-methyl-2-(E)-butenyl 4-diphosphate. In Lawsonia intracellularis (strain PHE/MN1-00), this protein is 4-hydroxy-3-methylbut-2-en-1-yl diphosphate synthase (flavodoxin).